Reading from the N-terminus, the 192-residue chain is Small ribosomal subunit protein uS5 (192 aa).

The S5 DRBM domain maps to 20-83; that stretch reads FVDKLVHINR…EAAKRGLIRV (64 aa). Positions 162 to 192 are disordered; the sequence is SVAARRGLKVSALQARRRDADPADTSDAAVA.

Belongs to the universal ribosomal protein uS5 family. Part of the 30S ribosomal subunit. Contacts proteins S4 and S8.

In terms of biological role, with S4 and S12 plays an important role in translational accuracy. Located at the back of the 30S subunit body where it stabilizes the conformation of the head with respect to the body. The chain is Small ribosomal subunit protein uS5 from Methylorubrum populi (strain ATCC BAA-705 / NCIMB 13946 / BJ001) (Methylobacterium populi).